A 322-amino-acid polypeptide reads, in one-letter code: Glycerate dehydrogenase (322 aa).

NAD(+) contacts are provided by residues 158-159, Asp178, 239-241, and Asp265; these read SI and TAR. The active site involves Arg241. Glu270 is an active-site residue. His288 (proton donor) is an active-site residue. NAD(+) is bound at residue 288 to 291; the sequence is HIGS.

This sequence belongs to the D-isomer specific 2-hydroxyacid dehydrogenase family. As to quaternary structure, homodimer.

The catalysed reaction is (R)-glycerate + NAD(+) = 3-hydroxypyruvate + NADH + H(+). The protein operates within one-carbon metabolism; formaldehyde assimilation via serine pathway. Its function is as follows. Active on hydroxypyruvate and glyoxylate. This is Glycerate dehydrogenase from Hyphomicrobium methylovorum.